A 149-amino-acid polypeptide reads, in one-letter code: Large ribosomal subunit protein bL9 (149 aa).

This sequence belongs to the bacterial ribosomal protein bL9 family.

Binds to the 23S rRNA. This Xanthomonas axonopodis pv. citri (strain 306) protein is Large ribosomal subunit protein bL9.